The following is a 254-amino-acid chain: 5-oxoprolinase subunit A (254 aa).

The protein belongs to the LamB/PxpA family. As to quaternary structure, forms a complex composed of PxpA, PxpB and PxpC.

The enzyme catalyses 5-oxo-L-proline + ATP + 2 H2O = L-glutamate + ADP + phosphate + H(+). Functionally, catalyzes the cleavage of 5-oxoproline to form L-glutamate coupled to the hydrolysis of ATP to ADP and inorganic phosphate. The polypeptide is 5-oxoprolinase subunit A (Rhodopseudomonas palustris (strain BisB5)).